The following is a 519-amino-acid chain: (3S,6E)-nerolidol synthase 1 (519 aa).

Mg(2+) contacts are provided by D273, D277, D417, S421, and E425. Positions 273–277 (DDIFD) match the DDXXD motif motif.

This sequence belongs to the terpene synthase family. Tpsg subfamily. Mg(2+) serves as cofactor. The cofactor is Mn(2+). As to expression, expressed in receptacle tissue. Not detected in leaves or green fruit.

The protein resides in the cytoplasm. It localises to the cytosol. It catalyses the reaction (2E,6E)-farnesyl diphosphate + H2O = (3S,6E)-nerolidol + diphosphate. It functions in the pathway secondary metabolite biosynthesis; terpenoid biosynthesis. Its function is as follows. Involved in monoterpene (C10) and sesquiterpene (C15) biosynthesis. Converts geranyl diphosphate (GPP) into S-linalool and farnesyl diphosphate (FPP) into (3S)-E-nerolidol. Exclusively present and highly expressed in the fruit of cultivated (octaploid) varieties. The protein is (3S,6E)-nerolidol synthase 1 of Fragaria ananassa (Strawberry).